Reading from the N-terminus, the 438-residue chain is Putative hydrolase MSMEG_3995/MSMEI_3903 (438 aa).

Residues Asp-95, Asp-104, Glu-143, and His-208 each contribute to the Zn(2+) site. Lys-217 is covalently cross-linked (Isoglutamyl lysine isopeptide (Lys-Gln) (interchain with Q-Cter in protein Pup)). His-400 is a Zn(2+) binding site.

This sequence belongs to the peptidase M20 family. The cofactor is Zn(2+).

This is Putative hydrolase MSMEG_3995/MSMEI_3903 from Mycolicibacterium smegmatis (strain ATCC 700084 / mc(2)155) (Mycobacterium smegmatis).